A 716-amino-acid polypeptide reads, in one-letter code: Beta-galactosidase (716 aa).

Glu389 (proton donor) is an active-site residue. Glu462 serves as the catalytic Nucleophile.

Belongs to the glycosyl hydrolase 2 family. Homodimer.

The enzyme catalyses Hydrolysis of terminal non-reducing beta-D-galactose residues in beta-D-galactosides.. Its function is as follows. Displays beta-galactosidase activity with the artificial chromogenic substrate o-nitrophenyl-beta-D-galactopyranoside (ONPG). The sequence is that of Beta-galactosidase from Thermoanaerobacterium thermosulfurigenes (Clostridium thermosulfurogenes).